The following is a 388-amino-acid chain: Meiotic driver wtf13 (388 aa).

Over residues 1–29 the composition is skewed to basic and acidic residues; it reads MKNKDYPLRSSMDELSTKNDNEIDLEKGP. Residues 1 to 39 form a disordered region; the sequence is MKNKDYPLRSSMDELSTKNDNEIDLEKGPLPEYNSEDGS. The next 9 helical transmembrane spans lie at 89–109, 119–139, 152–172, 182–202, 207–227, 243–263, 267–287, 297–317, and 331–351; these read LLISVLAVIVVFFTAWVCVNP, AFSVTIGITCPIVFIAIFCFF, VTVIFLAQCVKVTAISLAQCV, CVKVTAVFLAKCVKVIAVGLY, DLVVTIWLAWVVICFILFGCV, CSISAALFFILLLVCIPIWTL, LFGLFQVLGVQSCVVIVTKGL, ATGYEIEASSLFVIGNFLFFY, and FIGNGIASFLGGLGNAFGGIG.

It belongs to the WTF family. In terms of assembly, homomer. Forms protein aggregates. The two isoforms can interact with each other and with themselves. High sequence similarity is required for their interaction.

Its subcellular location is the spore membrane. It is found in the vacuole membrane. The protein localises to the ascus epiplasm. It localises to the cytoplasm. The protein resides in the endoplasmic reticulum membrane. Promotes unequal transmission of alleles from the parental zygote to progeny spores by acting as poison/antidote system where the poison and antidote proteins are produced from the same locus; the poison component is trans-acting and targets all spores within an ascus whereas the antidote component is spore-specific, leading to poisoning of all progeny that do not inherit the allele. Functionally, localizes isoform 2 to the vacuole thereby facilitating its degradation. In addition to suppressing isoform 2, also suppresses S.pombe strain FY29033 wtf18 isoform 2. In terms of biological role, forms toxic aggregates that disrupt spore maturation. In Schizosaccharomyces pombe (strain 972 / ATCC 24843) (Fission yeast), this protein is Meiotic driver wtf13.